A 381-amino-acid chain; its full sequence is Pentatricopeptide repeat-containing protein 2, mitochondrial (381 aa).

One copy of the PPR repeat lies at 159 to 193 (TSFNILMDMLFTKGKYERALQVLIEMKNQDVRFSK). Phosphoserine is present on Ser-375.

This sequence belongs to the PTCD2 family. In terms of tissue distribution, high expression in heart and liver and low expression in kidney, brain and testis.

Its subcellular location is the mitochondrion. Involved in mitochondrial RNA maturation and mitochondrial respiratory chain function. The protein is Pentatricopeptide repeat-containing protein 2, mitochondrial (Ptcd2) of Mus musculus (Mouse).